Reading from the N-terminus, the 177-residue chain is SAYSvFN domain-containing protein 1 (177 aa).

Over 1 to 100 (MADFQEQLRQ…CLKYTLWTVY (100 aa)) the chain is Cytoplasmic. Residues 57 to 70 (SENSQDEAVTSSES) show a composition bias toward polar residues. Residues 57–85 (SENSQDEAVTSSESELVPEEQPTRSTDHH) are disordered. The segment at residues 101–121 (LLFWITLYVIAIKLSFGLVFL) is an intramembrane region (helical). At 122–177 (MFSALFGIYFNTRTEPKKRNEMSAYSVFNKNCESIDGTLKAEQFEREIRYGSGSVR) the chain is on the cytoplasmic side.

The protein belongs to the SAYSD1 family.

It localises to the endoplasmic reticulum membrane. Its function is as follows. Ufmylation 'reader' component of a translocation-associated quality control pathway, a mechanism that takes place when a ribosome has stalled during translation, and which is required to degrade clogged substrates. Specifically recognizes and binds ufmylated ribosomes when a ribosome has stalled, promoting the transport of stalled nascent chain to lysosomes for degradation. The protein is SAYSvFN domain-containing protein 1 of Drosophila melanogaster (Fruit fly).